Consider the following 525-residue polypeptide: Acyl-CoA-binding domain-containing protein 5 (525 aa).

One can recognise an ACB domain in the interval 43–132 (HETRFEAAVK…MKKIIETMPM (90 aa)). Residues 54-63 (IQSLPKNGSF), 74-78 (YSFYK), lysine 100, and tyrosine 119 each bind an acyl-CoA. The segment at 157–216 (RSSDITSDLDNVLTSTPNAKTVNGKAESSDSGAESEEEEAQEEVKGAEQSDNDKKMMKKS) is disordered. The segment covering 158–177 (SSDITSDLDNVLTSTPNAKT) has biased composition (polar residues). Residues 181 to 210 (KAESSDSGAESEEEEAQEEVKGAEQSDNDK) adopt a coiled-coil conformation. A phosphoserine mark is found at serine 184, serine 185, serine 187, serine 191, serine 206, serine 270, and serine 304. A compositionally biased stretch (basic and acidic residues) spans 198–216 (EEVKGAEQSDNDKKMMKKS). Over residues 367–376 (EVKHGGEDGR) the composition is skewed to basic and acidic residues. Residues 367–433 (EVKHGGEDGR…ERWGSDRGSR (67 aa)) form a disordered region. Serine 419 bears the Phosphoserine mark. Residues 422-432 (DGERWGSDRGS) are compositionally biased toward basic and acidic residues. Residues 438–467 (EQIALVLMRLQEDMQNVLQRLQKLETLTAL) adopt a coiled-coil conformation. An N6-acetyllysine modification is found at lysine 460. Residues 489-509 (WWPFEMSPGVLTFAIIWPFIA) form a helical membrane-spanning segment.

This sequence belongs to the ATG37 family.

The protein localises to the peroxisome membrane. Its function is as follows. Acyl-CoA binding protein which acts as the peroxisome receptor for pexophagy but is dispensable for aggrephagy and nonselective autophagy. Binds medium- and long-chain acyl-CoA esters. In Pongo abelii (Sumatran orangutan), this protein is Acyl-CoA-binding domain-containing protein 5 (ACBD5).